The following is a 496-amino-acid chain: Glycylpeptide N-tetradecanoyltransferase 1 (496 aa).

The disordered stretch occupies residues 1–82; sequence MADESETAVK…STQDQPVKMT (82 aa). Residues S31 and S47 each carry the phosphoserine modification. Positions 55-66 are enriched in basic residues; it reads KKKKKKQKKKKE. Residue S83 is modified to Phosphoserine. 11 residues coordinate tetradecanoyl-CoA: Q118, F119, W120, F247, L248, C249, V250, S256, R258, V259, and A260.

Belongs to the NMT family. In terms of tissue distribution, ubiquitous.

It is found in the cytoplasm. Its subcellular location is the cytosol. The protein resides in the membrane. It catalyses the reaction N-terminal glycyl-[protein] + tetradecanoyl-CoA = N-tetradecanoylglycyl-[protein] + CoA + H(+). It carries out the reaction N-terminal glycyl-L-lysyl-[protein] + tetradecanoyl-CoA = N-terminal glycyl-(N(6)-tetradecanoyl)-L-lysyl-[protein] + CoA + H(+). Its function is as follows. Adds a myristoyl group to the N-terminal glycine residue of certain cellular and viral proteins. Also able to mediate N-terminal lysine myristoylation of proteins: catalyzes myristoylation of ARF6 on both 'Gly-2' and 'Lys-3'. Lysine myristoylation is required to maintain ARF6 on membranes during the GTPase cycle. Required for normal embryogenesis. This is Glycylpeptide N-tetradecanoyltransferase 1 from Mus musculus (Mouse).